Here is a 159-residue protein sequence, read N- to C-terminus: Transcriptional repressor NrdR (159 aa).

Residues 3 to 34 (CPYCQSEDTQVKDSRPAEDGAAIRRRRVCPDC) fold into a zinc finger. Residues 49–139 (LVVVKKSGRK…VYRNFREAKD (91 aa)) enclose the ATP-cone domain.

This sequence belongs to the NrdR family. Zn(2+) serves as cofactor.

Its function is as follows. Negatively regulates transcription of bacterial ribonucleotide reductase nrd genes and operons by binding to NrdR-boxes. This Mesorhizobium japonicum (strain LMG 29417 / CECT 9101 / MAFF 303099) (Mesorhizobium loti (strain MAFF 303099)) protein is Transcriptional repressor NrdR.